A 283-amino-acid polypeptide reads, in one-letter code: Protoheme IX farnesyltransferase 1 (283 aa).

The next 9 membrane-spanning stretches (helical) occupy residues 14–34, 35–55, 84–104, 107–127, 133–153, 163–183, 208–228, 231–251, and 258–278; these read IALMIALTAITGYGAVATKVD, PVALLLLTLAMILGSAASAVF, LGFALAVVLMVAGMALANAAF, VVALHLFLGGFVYVAIYTVWL, TNIIIGGAAGSFAVLAGAAAV, VLALVLFLWTPSHFWSLAILL, ILANTVILVGASLLPWGLGLL, VYGFVAAVSGAVLLGFNVVLV, and WAGWNFAASMPYLLLLFIAVF.

Belongs to the UbiA prenyltransferase family. Protoheme IX farnesyltransferase subfamily.

It localises to the cell inner membrane. It catalyses the reaction heme b + (2E,6E)-farnesyl diphosphate + H2O = Fe(II)-heme o + diphosphate. The protein operates within porphyrin-containing compound metabolism; heme O biosynthesis; heme O from protoheme: step 1/1. Functionally, converts heme B (protoheme IX) to heme O by substitution of the vinyl group on carbon 2 of heme B porphyrin ring with a hydroxyethyl farnesyl side group. The polypeptide is Protoheme IX farnesyltransferase 1 (Paramagnetospirillum magneticum (strain ATCC 700264 / AMB-1) (Magnetospirillum magneticum)).